The sequence spans 215 residues: MTAEFIIRLILAAIACGAIGMERQMRGKGAGLRTHVLIGMGSALFMIVSKYGFADVLSLDHVGLDPSRIAAQVVTGVGFIGAGNILVRNQNIVGLTTAADIWVTAAIGMVIGSGMYELGIYGSVMTLLVLEVFHQLTFRLMNKNYHLQLTLVNGNTVSMLDWFKQQKIKTDLVSLQENEDHEVVAIDIQLHATTSIEDLLRLLKGMAGVKGVSIS.

5 consecutive transmembrane segments (helical) span residues 1-21, 36-56, 67-87, 92-112, and 118-138; these read MTAEFIIRLILAAIACGAIGM, VLIGMGSALFMIVSKYGFADV, SRIAAQVVTGVGFIGAGNILV, IVGLTTAADIWVTAAIGMVIG, and LGIYGSVMTLLVLEVFHQLTF.

The protein belongs to the MgtC/SapB family.

It is found in the cell inner membrane. This is an uncharacterized protein from Escherichia coli O157:H7.